A 423-amino-acid chain; its full sequence is Kynureninase (423 aa).

Pyridoxal 5'-phosphate contacts are provided by residues leucine 105, serine 106, 133-136 (FPSD), aspartate 218, histidine 221, and tyrosine 243. Position 244 is an N6-(pyridoxal phosphate)lysine (lysine 244). Residues tryptophan 273 and asparagine 301 each coordinate pyridoxal 5'-phosphate.

Belongs to the kynureninase family. Homodimer. Pyridoxal 5'-phosphate serves as cofactor.

The enzyme catalyses L-kynurenine + H2O = anthranilate + L-alanine + H(+). It catalyses the reaction 3-hydroxy-L-kynurenine + H2O = 3-hydroxyanthranilate + L-alanine + H(+). The protein operates within amino-acid degradation; L-kynurenine degradation; L-alanine and anthranilate from L-kynurenine: step 1/1. It participates in cofactor biosynthesis; NAD(+) biosynthesis; quinolinate from L-kynurenine: step 2/3. In terms of biological role, catalyzes the cleavage of L-kynurenine (L-Kyn) and L-3-hydroxykynurenine (L-3OHKyn) into anthranilic acid (AA) and 3-hydroxyanthranilic acid (3-OHAA), respectively. The chain is Kynureninase from Xanthomonas oryzae pv. oryzae (strain KACC10331 / KXO85).